The following is a 779-amino-acid chain: Lon protease (779 aa).

Residues 7–190 enclose the Lon N-terminal domain; that stretch reads VPVLFLNDSI…LLIGWTGDHL (184 aa). An ATP-binding site is contributed by 352 to 359; it reads GPPGVGKT. The Lon proteolytic domain maps to 589 to 769; sequence TAVPGVATGL…ADIIAAALEP (181 aa). Active-site residues include S675 and K718.

Belongs to the peptidase S16 family. As to quaternary structure, homohexamer. Organized in a ring with a central cavity. Oligomerization is Mg(2+)-dependent.

Its subcellular location is the cytoplasm. It carries out the reaction Hydrolysis of proteins in presence of ATP.. Stimulated by unfolded protein. ATP-dependent serine protease that mediates the selective degradation of mutant and abnormal proteins as well as certain short-lived regulatory proteins. Required for cellular homeostasis and for survival from DNA damage and developmental changes induced by stress. Degrades polypeptides processively to yield small peptide fragments that are 5 to 10 amino acids long. Binds to DNA in a double-stranded, site-specific manner. The protein is Lon protease of Mycolicibacterium smegmatis (Mycobacterium smegmatis).